We begin with the raw amino-acid sequence, 276 residues long: Syntaxin-12 (276 aa).

Serine 2 carries the post-translational modification N-acetylserine. Residues 2 to 248 lie on the Cytoplasmic side of the membrane; sequence SYGPLDMYRN…RAAYYQKKSR (247 aa). A coiled-coil region spans residues 33 to 131; that stretch reads IQRISQATAQ…RRVSEKEKES (99 aa). Residues serine 139, serine 142, serine 218, and serine 225 each carry the phosphoserine modification. The 63-residue stretch at 178-240 folds into the t-SNARE coiled-coil homology domain; that stretch reads LELIKERETA…ERATEQLQRA (63 aa). Residues 249 to 269 traverse the membrane as a helical; Anchor for type IV membrane protein segment; that stretch reads KKMCILVLVLSVIILILGLII. Topologically, residues 270-276 are vesicular; it reads WLVYKTK.

This sequence belongs to the syntaxin family. Interacts with NAPA and SNAP23. Identified in a complex containing STX6, STX12, VAMP4 and VTI1A. Associates with the BLOC-1 complex. Interacts with BLOC1S6. Interacts with GRIPAP1. Forms a complex with GRIP1, GRIA2 and NSG1; controls the intracellular fate of AMPAR and the endosomal sorting of the GRIA2 subunit toward recycling and membrane targeting. Interacts with NSG1. Interacts with TPC1. Interacts (via N-terminus) with VPS13B.

Its subcellular location is the endosome membrane. It localises to the golgi apparatus membrane. The protein localises to the endomembrane system. It is found in the early endosome membrane. The protein resides in the recycling endosome membrane. Functionally, SNARE promoting fusion of transport vesicles with target membranes. Together with SNARE STX6, promotes movement of vesicles from endosomes to the cell membrane, and may therefore function in the endocytic recycling pathway. Through complex formation with GRIP1, GRIA2 and NSG1 controls the intracellular fate of AMPAR and the endosomal sorting of the GRIA2 subunit toward recycling and membrane targeting. This is Syntaxin-12 (STX12) from Homo sapiens (Human).